The primary structure comprises 892 residues: Protein BNI4 (892 aa).

Phosphoserine occurs at positions 43 and 133. Disordered stretches follow at residues 185–287 and 305–387; these read DFLS…EDTS and KPVI…QDTE. Residues 208–223 show a composition bias toward basic and acidic residues; it reads TILERDNNLPVKREEN. 2 stretches are compositionally biased toward polar residues: residues 224–236 and 270–280; these read TIIN…TTHS and DSSAQRTTSAG. S281 bears the Phosphoserine mark. A compositionally biased stretch (polar residues) spans 309–335; that stretch reads GNNSVTNEKNKMSSSSTFSMNIQTSLK. Residues 346–356 are compositionally biased toward low complexity; that stretch reads SSSSIFNSFLK. Basic and acidic residues predominate over residues 357–371; that stretch reads GKIETSDSPRKEPMR. Phosphoserine occurs at positions 364 and 394. T410 carries the post-translational modification Phosphothreonine. 3 positions are modified to phosphoserine: S476, S500, and S503. 3 disordered regions span residues 506-526, 618-644, and 685-734; these read RTRS…RSLT, SDEE…SERQ, and YATE…GDER. A Phosphoserine modification is found at S618. Residues 624-643 show a composition bias toward basic and acidic residues; it reads EVERDVPKPREEPLKKDSER. T703 carries the phosphothreonine modification. Residues 707 to 719 show a composition bias toward basic and acidic residues; it reads RNNKEDSYKERET. Phosphoserine occurs at positions 746 and 825.

In terms of assembly, may interact with CHS3 and seems to be an adapter (along with SKT5) to link CHS3 to septins.

This chain is Protein BNI4 (BNI4), found in Saccharomyces cerevisiae (strain ATCC 204508 / S288c) (Baker's yeast).